We begin with the raw amino-acid sequence, 89 residues long: Small ribosomal subunit protein uS15 (89 aa).

It belongs to the universal ribosomal protein uS15 family. As to quaternary structure, part of the 30S ribosomal subunit. Forms a bridge to the 50S subunit in the 70S ribosome, contacting the 23S rRNA.

One of the primary rRNA binding proteins, it binds directly to 16S rRNA where it helps nucleate assembly of the platform of the 30S subunit by binding and bridging several RNA helices of the 16S rRNA. Its function is as follows. Forms an intersubunit bridge (bridge B4) with the 23S rRNA of the 50S subunit in the ribosome. This is Small ribosomal subunit protein uS15 from Orientia tsutsugamushi (strain Boryong) (Rickettsia tsutsugamushi).